Here is a 341-residue protein sequence, read N- to C-terminus: Biotin synthase (341 aa).

Residues 39 to 263 (EQVQLCTLLS…VAVARITMPL (225 aa)) enclose the Radical SAM core domain. [4Fe-4S] cluster is bound by residues C54, C58, and C61. [2Fe-2S] cluster is bound by residues C98, C129, C189, and R267.

This sequence belongs to the radical SAM superfamily. Biotin synthase family. In terms of assembly, homodimer. [4Fe-4S] cluster is required as a cofactor. Requires [2Fe-2S] cluster as cofactor.

It catalyses the reaction (4R,5S)-dethiobiotin + (sulfur carrier)-SH + 2 reduced [2Fe-2S]-[ferredoxin] + 2 S-adenosyl-L-methionine = (sulfur carrier)-H + biotin + 2 5'-deoxyadenosine + 2 L-methionine + 2 oxidized [2Fe-2S]-[ferredoxin]. Its pathway is cofactor biosynthesis; biotin biosynthesis; biotin from 7,8-diaminononanoate: step 2/2. Functionally, catalyzes the conversion of dethiobiotin (DTB) to biotin by the insertion of a sulfur atom into dethiobiotin via a radical-based mechanism. The sequence is that of Biotin synthase from Erythrobacter litoralis (strain HTCC2594).